The primary structure comprises 354 residues: MGVLDIVKAGVISGDELNKIYDYAKAEGFAIPAVNVVGTDSINAVLEAAKKVNSPVIIQFSNGGAKFYAGKNCPNGEVLGAISGAKHVHLLAKAYGVPVILHTDHAARKLLPWIDGLIEANAQYKKTHGQALFSSHMLDLSEESLEENLSTCEVYLQKLDALGVALEIELGCTGGEEDGVDNTGIDNSKLYTQPEDVALAYERLGKISDKFSIAASFGNVHGVYKPGNVSLQPEILKNSQKFVKDKFALNSDKPINFVFHGGSGSELKDIKNAVSYGVIKMNIDTDTQWAFWDGVREYELKNRAYLQGQIGNPEGDDKPNKKYYDPRVWLRSGEESMIKRLEIAFEDLNCINKN.

Serine 61 contributes to the D-glyceraldehyde 3-phosphate binding site. Aspartate 104 functions as the Proton donor in the catalytic mechanism. Zn(2+)-binding residues include histidine 105, aspartate 139, glutamate 169, and histidine 221. A dihydroxyacetone phosphate-binding site is contributed by glycine 222. Histidine 260 contributes to the Zn(2+) binding site. Residues 261-263 (GGS) and 282-285 (NIDT) contribute to the dihydroxyacetone phosphate site.

This sequence belongs to the class II fructose-bisphosphate aldolase family. As to quaternary structure, homodimer. Zn(2+) serves as cofactor.

It carries out the reaction beta-D-fructose 1,6-bisphosphate = D-glyceraldehyde 3-phosphate + dihydroxyacetone phosphate. It participates in carbohydrate degradation; glycolysis; D-glyceraldehyde 3-phosphate and glycerone phosphate from D-glucose: step 4/4. Its function is as follows. Catalyzes the aldol condensation of dihydroxyacetone phosphate (DHAP or glycerone-phosphate) with glyceraldehyde 3-phosphate (G3P) to form fructose 1,6-bisphosphate (FBP) in gluconeogenesis and the reverse reaction in glycolysis. The chain is Fructose-bisphosphate aldolase (fba) from Campylobacter jejuni subsp. jejuni serotype O:2 (strain ATCC 700819 / NCTC 11168).